Reading from the N-terminus, the 137-residue chain is ATP synthase epsilon chain (137 aa).

Belongs to the ATPase epsilon chain family. In terms of assembly, F-type ATPases have 2 components, CF(1) - the catalytic core - and CF(0) - the membrane proton channel. CF(1) has five subunits: alpha(3), beta(3), gamma(1), delta(1), epsilon(1). CF(0) has three main subunits: a, b and c.

Its subcellular location is the cell inner membrane. Functionally, produces ATP from ADP in the presence of a proton gradient across the membrane. The polypeptide is ATP synthase epsilon chain (Pseudoalteromonas atlantica (strain T6c / ATCC BAA-1087)).